Reading from the N-terminus, the 525-residue chain is Probable protein kinase UbiB (525 aa).

Residues 118-500 (DFERVPVASA…QKRTNRLLQG (383 aa)) form the Protein kinase domain. ATP contacts are provided by residues 124–132 (VASASIAQV) and Lys150. Asp285 acts as the Proton acceptor in catalysis. A helical membrane pass occupies residues 501 to 521 (LLLFGVAVGVGAALARVFLAL).

This sequence belongs to the ABC1 family. UbiB subfamily.

The protein localises to the cell inner membrane. Its pathway is cofactor biosynthesis; ubiquinone biosynthesis [regulation]. In terms of biological role, is probably a protein kinase regulator of UbiI activity which is involved in aerobic coenzyme Q (ubiquinone) biosynthesis. This chain is Probable protein kinase UbiB, found in Paraburkholderia xenovorans (strain LB400).